An 839-amino-acid polypeptide reads, in one-letter code: Phenylalanine--tRNA ligase beta subunit (839 aa).

The region spanning 42-166 (GELTGPIVIG…PPSVEGHQLV (125 aa)) is the tRNA-binding domain. Residues 421 to 496 (PEMPRQTINA…RKIGFDRIKA (76 aa)) form the B5 domain. Residues Asp474, Asp480, Glu483, and Glu484 each contribute to the Mg(2+) site. One can recognise an FDX-ACB domain in the interval 745-838 (SSFPVAKEDV…AEETCGAQLR (94 aa)).

It belongs to the phenylalanyl-tRNA synthetase beta subunit family. Type 1 subfamily. Tetramer of two alpha and two beta subunits. Mg(2+) serves as cofactor.

The protein resides in the cytoplasm. The catalysed reaction is tRNA(Phe) + L-phenylalanine + ATP = L-phenylalanyl-tRNA(Phe) + AMP + diphosphate + H(+). The sequence is that of Phenylalanine--tRNA ligase beta subunit from Cutibacterium acnes (strain DSM 16379 / KPA171202) (Propionibacterium acnes).